The primary structure comprises 775 residues: Thiamine repressible genes regulatory protein thi1 (775 aa).

Residues 39–65 (CKHCRQKKIKCNGGQPCISCKTLNIEC) constitute a DNA-binding region (zn(2)-C6 fungal-type). At S208 the chain carries Phosphoserine. Disordered regions lie at residues 676–695 (LTGE…FQPF) and 754–775 (NVSE…EKNG).

Its subcellular location is the nucleus. Its function is as follows. Transcription factor that activates the nmt1 promoter. Regulation of thiamine repressible genes. Positively regulates conjugation during meiosis. In Schizosaccharomyces pombe (strain 972 / ATCC 24843) (Fission yeast), this protein is Thiamine repressible genes regulatory protein thi1 (thi1).